Here is a 473-residue protein sequence, read N- to C-terminus: Ribulose bisphosphate carboxylase large chain 3 (473 aa).

Substrate is bound by residues asparagine 116 and threonine 166. Lysine 168 acts as the Proton acceptor in catalysis. Lysine 170 lines the substrate pocket. Mg(2+) contacts are provided by lysine 194, aspartate 196, and glutamate 197. Lysine 194 carries the N6-carboxylysine modification. Catalysis depends on histidine 287, which acts as the Proton acceptor. Residues arginine 288, histidine 320, and serine 372 each coordinate substrate.

It belongs to the RuBisCO large chain family. Type I subfamily. In terms of assembly, heterohexadecamer of 8 large chains and 8 small chains. The cofactor is Mg(2+).

It carries out the reaction 2 (2R)-3-phosphoglycerate + 2 H(+) = D-ribulose 1,5-bisphosphate + CO2 + H2O. The enzyme catalyses D-ribulose 1,5-bisphosphate + O2 = 2-phosphoglycolate + (2R)-3-phosphoglycerate + 2 H(+). Functionally, ruBisCO catalyzes two reactions: the carboxylation of D-ribulose 1,5-bisphosphate, the primary event in carbon dioxide fixation, as well as the oxidative fragmentation of the pentose substrate. Both reactions occur simultaneously and in competition at the same active site. The protein is Ribulose bisphosphate carboxylase large chain 3 of Nitrobacter hamburgensis (strain DSM 10229 / NCIMB 13809 / X14).